The sequence spans 134 residues: MANPNFTPSWPLYKDADGVYVSALPIKAIKYANDGSANAEFDGPYADQYMSAQTVAVFKPEVGGYLFRSQYGELLYMSKTAFEANYTSASGSVANAETADKLSTARTITLTGAVTGSASFDGSANVTIETTSGS.

The protein localises to the virion. In terms of biological role, may cover virion head capsid and play a role in capsid stabilization. The chain is Decoration protein (dec) from Salmonella typhimurium (Bacteriophage ST64T).